The following is a 386-amino-acid chain: uncharacterized protein (386 aa).

The segment at 355–386 (PSEAQKVQVKSNKKPPIAPKPEHLKKRDHGLC) is disordered. Basic residues predominate over residues 377–386 (HLKKRDHGLC).

This is an uncharacterized protein from Rickettsia prowazekii (strain Madrid E).